The chain runs to 229 residues: Protein rep (229 aa).

Tyr-214 contributes to the DNA binding site.

The protein belongs to the Gram-positive plasmids replication protein type 1 family.

Functionally, produces a single-strand nick in a specific site of the plasmid, and this nick results in single-strand replication by rolling circle mechanism. The polypeptide is Protein rep (Staphylococcus aureus).